The primary structure comprises 155 residues: Fibroblast growth factor 1 (155 aa).

Alanine 2 is subject to N-acetylalanine. Positions 2–15 (AEGEITTFSALTER) are excised as a propeptide. Asparagine 33 is a binding site for heparin. A heparin-binding region spans residues 127-143 (KKNGSCKRGPRTHYGQK).

It belongs to the heparin-binding growth factors family. Monomer. Homodimer. Interacts with FGFR1, FGFR2, FGFR3 and FGFR4. Affinity between fibroblast growth factors (FGFs) and their receptors is increased by heparan sulfate glycosaminoglycans that function as coreceptors. Found in a complex with FGFBP1, FGF1 and FGF2. Interacts with FGFBP1. Part of a Cu(2+)-dependent multiprotein aggregate containing FGF1, S100A13 and SYT1. Interacts with SYT1. Interacts with S100A13. Interacts with LRRC59. Interacts with CSNKA, CSNKB and FIBP. While binding with LRRC59, CSNKA and FIBP seem mutually exclusive, CSNKB and FIBP may cooperatively interact with FGF1. Forms a ternary complex with FGFR1 and ITGAV:ITGB3 and induces the recruitment of PTPN11 to the complex. In the nucleus, phosphorylated by PKC/PRKCD.

Its subcellular location is the secreted. The protein resides in the cytoplasm. It is found in the cell cortex. The protein localises to the cytosol. It localises to the nucleus. In terms of biological role, plays an important role in the regulation of cell survival, cell division, angiogenesis, cell differentiation and cell migration. Functions as a potent mitogen in vitro. Acts as a ligand for FGFR1 and integrins. Binds to FGFR1 in the presence of heparin leading to FGFR1 dimerization and activation via sequential autophosphorylation on tyrosine residues which act as docking sites for interacting proteins, leading to the activation of several signaling cascades. Binds to integrin ITGAV:ITGB3. Its binding to integrin, subsequent ternary complex formation with integrin and FGFR1, and the recruitment of PTPN11 to the complex are essential for FGF1 signaling. Induces the phosphorylation and activation of FGFR1, FRS2, MAPK3/ERK1, MAPK1/ERK2 and AKT1. Can induce angiogenesis. The polypeptide is Fibroblast growth factor 1 (FGF1) (Mesocricetus auratus (Golden hamster)).